The sequence spans 115 residues: Dolichyl-diphosphooligosaccharide--protein glycosyltransferase subunit DAD1 (115 aa).

Over 1 to 31 (MVKSTSKDAQDLFRSLRSAYSATPTNLKIID) the chain is Cytoplasmic. A helical transmembrane segment spans residues 32–52 (LYVVFAVFTALIQVVYMALVG). Residues 53–55 (SFP) are Lumenal-facing. The helical transmembrane segment at 56-76 (FNSFLSGVLSCIGTAVLAVCL) threads the bilayer. Residues 77-94 (RIQVNKENKEFKDLAPER) are Cytoplasmic-facing. Residues 95–115 (AFADFVLCNLVLHLVIINFLG) form a helical membrane-spanning segment.

The protein belongs to the DAD/OST2 family. As to quaternary structure, component of the oligosaccharyltransferase (OST) complex. Ubiquitous.

The protein localises to the endoplasmic reticulum membrane. Its pathway is protein modification; protein glycosylation. Its function is as follows. Subunit of the oligosaccharyl transferase (OST) complex that catalyzes the initial transfer of a defined glycan (Glc(3)Man(9)GlcNAc(2) in eukaryotes) from the lipid carrier dolichol-pyrophosphate to an asparagine residue within an Asn-X-Ser/Thr consensus motif in nascent polypeptide chains, the first step in protein N-glycosylation. N-glycosylation occurs cotranslationally and the complex associates with the Sec61 complex at the channel-forming translocon complex that mediates protein translocation across the endoplasmic reticulum (ER). All subunits are required for a maximal enzyme activity. This Arabidopsis thaliana (Mouse-ear cress) protein is Dolichyl-diphosphooligosaccharide--protein glycosyltransferase subunit DAD1 (DAD1).